The sequence spans 65 residues: Small ribosomal subunit protein eS27 (65 aa).

Positions 20, 23, 39, and 42 each coordinate Zn(2+). Residues 20–42 form a C4-type zinc finger; that stretch reads CIDCGNEQIVFSNPATTVRCLVC.

This sequence belongs to the eukaryotic ribosomal protein eS27 family. As to quaternary structure, part of the 30S ribosomal subunit. Zn(2+) serves as cofactor.

The chain is Small ribosomal subunit protein eS27 from Thermococcus onnurineus (strain NA1).